The chain runs to 408 residues: S-adenosylmethionine synthase (408 aa).

ATP is bound at residue H15. D17 is a Mg(2+) binding site. E43 serves as a coordination point for K(+). L-methionine contacts are provided by E56 and Q100. Residues 100-110 (QSPDIAQGVNE) form a flexible loop region. Residues 171 to 173 (DGK), 248 to 249 (KF), D257, 263 to 264 (RK), A280, and K284 each bind ATP. Residue D257 coordinates L-methionine. Residue K288 participates in L-methionine binding.

It belongs to the AdoMet synthase family. As to quaternary structure, homotetramer; dimer of dimers. It depends on Mg(2+) as a cofactor. The cofactor is K(+).

The protein resides in the cytoplasm. The enzyme catalyses L-methionine + ATP + H2O = S-adenosyl-L-methionine + phosphate + diphosphate. It participates in amino-acid biosynthesis; S-adenosyl-L-methionine biosynthesis; S-adenosyl-L-methionine from L-methionine: step 1/1. Functionally, catalyzes the formation of S-adenosylmethionine (AdoMet) from methionine and ATP. The overall synthetic reaction is composed of two sequential steps, AdoMet formation and the subsequent tripolyphosphate hydrolysis which occurs prior to release of AdoMet from the enzyme. This Synechococcus sp. (strain CC9902) protein is S-adenosylmethionine synthase.